A 277-amino-acid chain; its full sequence is Diaminopimelate epimerase (277 aa).

Substrate-binding residues include Asn-13, Gln-46, and Asn-66. The Proton donor role is filled by Cys-75. Substrate contacts are provided by residues 76–77 (GN), Asn-160, Asn-193, and 211–212 (ER). Residue Cys-220 is the Proton acceptor of the active site. Substrate is bound at residue 221–222 (GS).

This sequence belongs to the diaminopimelate epimerase family. As to quaternary structure, homodimer.

The protein localises to the cytoplasm. The enzyme catalyses (2S,6S)-2,6-diaminopimelate = meso-2,6-diaminopimelate. The protein operates within amino-acid biosynthesis; L-lysine biosynthesis via DAP pathway; DL-2,6-diaminopimelate from LL-2,6-diaminopimelate: step 1/1. In terms of biological role, catalyzes the stereoinversion of LL-2,6-diaminopimelate (L,L-DAP) to meso-diaminopimelate (meso-DAP), a precursor of L-lysine and an essential component of the bacterial peptidoglycan. The sequence is that of Diaminopimelate epimerase from Legionella pneumophila (strain Lens).